Here is a 529-residue protein sequence, read N- to C-terminus: Ribonuclease Y (529 aa).

Residues glycine 4 to tyrosine 24 traverse the membrane as a helical segment. The KH domain occupies leucine 216–valine 297. One can recognise an HD domain in the interval alanine 342–glycine 435.

This sequence belongs to the RNase Y family.

The protein localises to the cell membrane. Endoribonuclease that initiates mRNA decay. The protein is Ribonuclease Y of Helicobacter pylori (strain ATCC 700392 / 26695) (Campylobacter pylori).